The chain runs to 142 residues: Hemoglobin subunit alpha (142 aa).

Residues 2–142 (VLSPADKSNV…VSTVLTSKYR (141 aa)) form the Globin domain. Phosphoserine is present on Ser4. An N6-succinyllysine mark is found at Lys8 and Lys12. Lys17 is subject to N6-acetyllysine; alternate. An N6-succinyllysine; alternate modification is found at Lys17. The residue at position 25 (Tyr25) is a Phosphotyrosine. Position 36 is a phosphoserine (Ser36). Position 41 is an N6-succinyllysine (Lys41). Ser50 is modified (phosphoserine). His59 lines the O2 pocket. Residue His88 participates in heme b binding. The residue at position 103 (Ser103) is a Phosphoserine. The residue at position 109 (Thr109) is a Phosphothreonine. Phosphoserine is present on residues Ser125 and Ser132. Phosphothreonine is present on residues Thr135 and Thr138. The residue at position 139 (Ser139) is a Phosphoserine.

Belongs to the globin family. As to quaternary structure, heterotetramer of two alpha chains and two beta chains. Red blood cells.

Functionally, involved in oxygen transport from the lung to the various peripheral tissues. Hemopressin acts as an antagonist peptide of the cannabinoid receptor CNR1. Hemopressin-binding efficiently blocks cannabinoid receptor CNR1 and subsequent signaling. This Ateles geoffroyi (Black-handed spider monkey) protein is Hemoglobin subunit alpha (HBA).